The primary structure comprises 447 residues: Signal recognition particle 54 kDa protein (447 aa).

GTP is bound by residues 103 to 110 (GVQGSGKT), 185 to 189 (DTAGR), and 245 to 248 (TKMD).

Belongs to the GTP-binding SRP family. SRP54 subfamily. In terms of assembly, part of the signal recognition particle protein translocation system, which is composed of SRP and FtsY. Archaeal SRP consists of a 7S RNA molecule of 300 nucleotides and two protein subunits: SRP54 and SRP19.

Its subcellular location is the cytoplasm. The catalysed reaction is GTP + H2O = GDP + phosphate + H(+). In terms of biological role, involved in targeting and insertion of nascent membrane proteins into the cytoplasmic membrane. Binds to the hydrophobic signal sequence of the ribosome-nascent chain (RNC) as it emerges from the ribosomes. The SRP-RNC complex is then targeted to the cytoplasmic membrane where it interacts with the SRP receptor FtsY. The protein is Signal recognition particle 54 kDa protein of Saccharolobus islandicus (strain Y.G.57.14 / Yellowstone #1) (Sulfolobus islandicus).